The chain runs to 571 residues: Cerebral cavernous malformations 2 protein-like (571 aa).

Disordered regions lie at residues 164–193, 212–295, and 544–571; these read AGVD…GTAE, AEAR…PQDP, and LAPD…DNYL. The segment covering 184–193 has biased composition (basic and acidic residues); sequence PEKRRVGTAE. Gly residues predominate over residues 212 to 223; sequence AEARAGGGGGGS. The segment covering 237-251 has biased composition (basic and acidic residues); that stretch reads WERRQTFSGSWERRH. The segment covering 253-264 has biased composition (gly residues); it reads GGGGGGGAGKPG. Pro residues predominate over residues 286 to 295; the sequence is GPNPLDPQDP. Positions 545-555 are enriched in acidic residues; the sequence is APDDDDDDEDE.

The protein belongs to the CCM2 family.

This chain is Cerebral cavernous malformations 2 protein-like (CCM2L), found in Homo sapiens (Human).